Reading from the N-terminus, the 468-residue chain is ATP synthase subunit beta (468 aa).

155–162 (GGAGVGKT) lines the ATP pocket.

The protein belongs to the ATPase alpha/beta chains family. F-type ATPases have 2 components, CF(1) - the catalytic core - and CF(0) - the membrane proton channel. CF(1) has five subunits: alpha(3), beta(3), gamma(1), delta(1), epsilon(1). CF(0) has three main subunits: a(1), b(2) and c(9-12). The alpha and beta chains form an alternating ring which encloses part of the gamma chain. CF(1) is attached to CF(0) by a central stalk formed by the gamma and epsilon chains, while a peripheral stalk is formed by the delta and b chains.

The protein localises to the cell membrane. It carries out the reaction ATP + H2O + 4 H(+)(in) = ADP + phosphate + 5 H(+)(out). In terms of biological role, produces ATP from ADP in the presence of a proton gradient across the membrane. The catalytic sites are hosted primarily by the beta subunits. The chain is ATP synthase subunit beta from Streptococcus pneumoniae (strain Taiwan19F-14).